The chain runs to 609 residues: Neutral protease (609 aa).

Positions 1-24 (MNKTQRHINWLLAVSAATALPVTA) are cleaved as a signal peptide. Positions 25–196 (AEMINVNDGS…VLQTWDGLNH (172 aa)) are excised as a propeptide. Histidine 343 provides a ligand contact to Zn(2+). Residue glutamate 344 is part of the active site. Zn(2+) contacts are provided by histidine 347 and glutamate 367. The active-site Proton donor is histidine 426.

It belongs to the peptidase M4 family. It depends on Zn(2+) as a cofactor.

It localises to the secreted. The enzyme catalyses Preferential cleavage of bonds with bulky hydrophobic groups in P2 and P1'. Phe at P1' is the most favored residue, which distinguished this enzyme from thermolysin.. Functionally, extracellular zinc metalloprotease. This chain is Neutral protease (nprV), found in Vibrio proteolyticus (Aeromonas proteolytica).